The chain runs to 149 residues: SsrA-binding protein (149 aa).

The interval Gly121 to Arg149 is disordered.

The protein belongs to the SmpB family.

Its subcellular location is the cytoplasm. In terms of biological role, required for rescue of stalled ribosomes mediated by trans-translation. Binds to transfer-messenger RNA (tmRNA), required for stable association of tmRNA with ribosomes. tmRNA and SmpB together mimic tRNA shape, replacing the anticodon stem-loop with SmpB. tmRNA is encoded by the ssrA gene; the 2 termini fold to resemble tRNA(Ala) and it encodes a 'tag peptide', a short internal open reading frame. During trans-translation Ala-aminoacylated tmRNA acts like a tRNA, entering the A-site of stalled ribosomes, displacing the stalled mRNA. The ribosome then switches to translate the ORF on the tmRNA; the nascent peptide is terminated with the 'tag peptide' encoded by the tmRNA and targeted for degradation. The ribosome is freed to recommence translation, which seems to be the essential function of trans-translation. In Polaromonas sp. (strain JS666 / ATCC BAA-500), this protein is SsrA-binding protein.